Here is a 718-residue protein sequence, read N- to C-terminus: Ribonuclease J (718 aa).

The disordered stretch occupies residues 1–130 (MNDSRNRGRK…RGNRGGGRRN (130 aa)). Low complexity-rich tracts occupy residues 55 to 91 (AAQG…NNNR) and 100 to 118 (SGNA…NRQG). The Zn(2+) site is built by His-220, His-222, Asp-224, His-225, His-287, and Asp-309. Substrate is bound at residue 510 to 514 (HTSGH). Residue His-536 coordinates Zn(2+).

This sequence belongs to the metallo-beta-lactamase superfamily. RNA-metabolizing metallo-beta-lactamase-like family. Bacterial RNase J subfamily. In terms of assembly, homodimer, may be a subunit of the RNA degradosome. Zn(2+) serves as cofactor.

Its subcellular location is the cytoplasm. Its function is as follows. An RNase that has 5'-3' exonuclease and possibly endoonuclease activity. Involved in maturation of rRNA and in some organisms also mRNA maturation and/or decay. This Corynebacterium glutamicum (strain ATCC 13032 / DSM 20300 / JCM 1318 / BCRC 11384 / CCUG 27702 / LMG 3730 / NBRC 12168 / NCIMB 10025 / NRRL B-2784 / 534) protein is Ribonuclease J.